We begin with the raw amino-acid sequence, 678 residues long: Geranylgeranyl transferase type-2 subunit alpha 1 (678 aa).

5 PFTA repeats span residues Y40–A74, I86–S120, S121–R155, S156–A190, and K201–N235. LRR repeat units follow at residues M510–L532, L533–M554, Q555–H578, K580–C604, and D638–V663.

This sequence belongs to the protein prenyltransferase subunit alpha family. In terms of assembly, heterotrimer composed of the alpha subunit RGTA, the beta subunit RGTB and REP; within this trimer, RGTA and RGTB form the catalytic component, while REP mediates peptide substrate binding.

It carries out the reaction geranylgeranyl diphosphate + L-cysteinyl-[protein] = S-geranylgeranyl-L-cysteinyl-[protein] + diphosphate. Its activity is regulated as follows. The enzymatic reaction requires the aid of the Rab escort protein REP. Catalyzes the transfer of a geranylgeranyl moiety from geranylgeranyl diphosphate to both cysteines of Rab proteins with the C-terminal sequence -CCXX, CXXX, -XCCX and -XCXC, such as RABA1A, RABA2A, RABF2A and RABG2. In vitro, can prenylate PGGTI targets with the C-terminal Cys-aliphatic-aliphatic-X (CaaX) with leucine in the terminal position. Substrates with the C-terminal sequence -CSIL such as ARAC11/ROP1 or GG2/AGG2 are prenylated independently of REP and when the alpha subunit is associated with a beta subunit (RGTB1 or RGTB2). The polypeptide is Geranylgeranyl transferase type-2 subunit alpha 1 (Arabidopsis thaliana (Mouse-ear cress)).